Consider the following 412-residue polypeptide: MGDYVLRCLTGGEVLEDHYTLACPHHPGFVRAEYTAKQLTVRENLPGVFRFSDWLPVRGSVPTRSRPVTFQNRELCRELGQPNLWITFTGYYPERGCYVPTGSFKELEALPTIVRLNEAGGGTLVVASAGNTGRAFAQMSAEFGTPVVLVVPESSADKLWTAGYFDHSSIRLVTVRGDYTDAIKTADKICEAPGFFPEGGGKNIARRDGMGCVMLDGAVTIGKLPEYYFQAVGSGTGGIAAWEAAIRLIGDGRFGSKFPELHLSQNLPFVPMVRAWNAGRDHIIDEDMPDAQASISAVSAHVLTNRTPPYGICGGVYDAMKSCGGQMYTVENKDAASAASLFAEAENGIDIDPAAAVAFASLISAAEEGSIRTNADILLNITGGGYQRVKKDCETAKIGVYETVDTGEVPVL.

At lysine 105 the chain carries N6-(pyridoxal phosphate)lysine. Positions 131 and 382 each coordinate pyridoxal 5'-phosphate.

It belongs to the threonine synthase family. Cysteate synthase subfamily. As to quaternary structure, homotrimer. Pyridoxal 5'-phosphate serves as cofactor.

It carries out the reaction O-phospho-L-serine + sulfite + H(+) = L-cysteate + phosphate. Its pathway is cofactor biosynthesis; coenzyme M biosynthesis. Its function is as follows. Specifically catalyzes the beta-elimination of phosphate from L-phosphoserine and the beta-addition of sulfite to the dehydroalanine intermediate to produce L-cysteate. This chain is Cysteate synthase, found in Methanocorpusculum labreanum (strain ATCC 43576 / DSM 4855 / Z).